Consider the following 450-residue polypeptide: Glucose-6-phosphate isomerase (450 aa).

T39 is subject to Phosphothreonine. Catalysis depends on E291, which acts as the Proton donor. Active-site residues include H312 and K426.

Belongs to the GPI family.

It is found in the cytoplasm. It catalyses the reaction alpha-D-glucose 6-phosphate = beta-D-fructose 6-phosphate. It participates in carbohydrate biosynthesis; gluconeogenesis. It functions in the pathway carbohydrate degradation; glycolysis; D-glyceraldehyde 3-phosphate and glycerone phosphate from D-glucose: step 2/4. Functionally, catalyzes the reversible isomerization of glucose-6-phosphate to fructose-6-phosphate. This Bacillus cereus (strain ATCC 10987 / NRS 248) protein is Glucose-6-phosphate isomerase.